Here is a 551-residue protein sequence, read N- to C-terminus: Endolytic murein transglycosylase (551 aa).

The Cytoplasmic segment spans residues 1–187 (MSEKSREEEK…PKKEKKSHVK (187 aa)). A disordered region spans residues 38–180 (VRTPANEPSA…EGAKPAKPKK (143 aa)). Low complexity-rich tracts occupy residues 100–110 (PSSPAEESGSR) and 145–157 (QAGP…ATET). The segment covering 159-174 (DIIRDTSRRSRREGAK) has biased composition (basic and acidic residues). Residues 188 to 208 (AFVISFLVFLALLSAGGYFGY) form a helical membrane-spanning segment. Topologically, residues 209–551 (QYVLDSLLPI…VAEHVNSKLN (343 aa)) are extracellular.

Belongs to the transglycosylase MltG family.

The protein localises to the cell membrane. It carries out the reaction a peptidoglycan chain = a peptidoglycan chain with N-acetyl-1,6-anhydromuramyl-[peptide] at the reducing end + a peptidoglycan chain with N-acetylglucosamine at the non-reducing end.. Functionally, functions as a peptidoglycan terminase that cleaves nascent peptidoglycan strands endolytically to terminate their elongation. Involved in peripheral peptidoglycan (PG) synthesis. This Streptococcus pneumoniae serotype 2 (strain D39 / NCTC 7466) protein is Endolytic murein transglycosylase.